The following is a 280-amino-acid chain: MTQPQRPSIYFNVHLVSDSTGETLNAIQRAACAQFENVQPLEHNYYLVRSERQLERVMKEIEAAPGVVWYTISDGALRGRLEAFCRERSIPTLPVLDPSIAMLSRHLGVAPNNRVAGQHALDEDYFERMEAINFTLAHDDGQNVESLIGADVILLGVSRTSKTPTCVYLANRKVRAGNIPLVPGVPLPDFMEKMGDKGPLVVGLKISAERLVQIRRQRLISLNQDEITEYADEEAVRDEITQANRLFQRNGWKTIDVSRRSVEETAAGILNMLHERWGHS.

An ADP-binding site is contributed by 156–163; sequence GVSRTSKT.

It belongs to the pyruvate, phosphate/water dikinase regulatory protein family. PDRP subfamily.

It carries out the reaction N(tele)-phospho-L-histidyl/L-threonyl-[pyruvate, phosphate dikinase] + ADP = N(tele)-phospho-L-histidyl/O-phospho-L-threonyl-[pyruvate, phosphate dikinase] + AMP + H(+). The enzyme catalyses N(tele)-phospho-L-histidyl/O-phospho-L-threonyl-[pyruvate, phosphate dikinase] + phosphate + H(+) = N(tele)-phospho-L-histidyl/L-threonyl-[pyruvate, phosphate dikinase] + diphosphate. Bifunctional serine/threonine kinase and phosphorylase involved in the regulation of the pyruvate, phosphate dikinase (PPDK) by catalyzing its phosphorylation/dephosphorylation. This Hyphomonas neptunium (strain ATCC 15444) protein is Putative pyruvate, phosphate dikinase regulatory protein.